The following is a 178-amino-acid chain: MLKGAIAQRYAQALFELAVQENLDGIEAELQELVQCVEQNAEVAHVLYHPHISLSEKKDLMNKIFAGELSVTVRNFLNLLIDRRRQNYLMEIARVFAHLADEARNIVEAKVASAIPLSETQEQRLHQELARMTGKNVRMVKEVRPELIGGVMIQIGDRVMDGTVAFKLQRIRQSLSHA.

It belongs to the ATPase delta chain family. As to quaternary structure, F-type ATPases have 2 components, F(1) - the catalytic core - and F(0) - the membrane proton channel. F(1) has five subunits: alpha(3), beta(3), gamma(1), delta(1), epsilon(1). F(0) has three main subunits: a(1), b(2) and c(10-14). The alpha and beta chains form an alternating ring which encloses part of the gamma chain. F(1) is attached to F(0) by a central stalk formed by the gamma and epsilon chains, while a peripheral stalk is formed by the delta and b chains.

It is found in the cell membrane. Its function is as follows. F(1)F(0) ATP synthase produces ATP from ADP in the presence of a proton or sodium gradient. F-type ATPases consist of two structural domains, F(1) containing the extramembraneous catalytic core and F(0) containing the membrane proton channel, linked together by a central stalk and a peripheral stalk. During catalysis, ATP synthesis in the catalytic domain of F(1) is coupled via a rotary mechanism of the central stalk subunits to proton translocation. In terms of biological role, this protein is part of the stalk that links CF(0) to CF(1). It either transmits conformational changes from CF(0) to CF(1) or is implicated in proton conduction. This Desulfitobacterium hafniense (strain Y51) protein is ATP synthase subunit delta.